A 333-amino-acid chain; its full sequence is GTPase Obg (333 aa).

An Obg domain is found at 1–159 (MQFIDLAEIH…RHLRLELKLL (159 aa)). The 169-residue stretch at 160–328 (AEVGIIGLPN…LLEAVWQELG (169 aa)) folds into the OBG-type G domain. GTP-binding positions include 166 to 173 (GLPNAGKS), 191 to 195 (FTTLV), 213 to 216 (DIPG), 280 to 283 (NKID), and 309 to 311 (SAV). Residues Ser173 and Thr193 each contribute to the Mg(2+) site.

Belongs to the TRAFAC class OBG-HflX-like GTPase superfamily. OBG GTPase family. In terms of assembly, monomer. Mg(2+) serves as cofactor.

The protein resides in the cytoplasm. Functionally, an essential GTPase which binds GTP, GDP and possibly (p)ppGpp with moderate affinity, with high nucleotide exchange rates and a fairly low GTP hydrolysis rate. Plays a role in control of the cell cycle, stress response, ribosome biogenesis and in those bacteria that undergo differentiation, in morphogenesis control. The protein is GTPase Obg of Thermosynechococcus vestitus (strain NIES-2133 / IAM M-273 / BP-1).